The following is a 337-amino-acid chain: Ketol-acid reductoisomerase (NADP(+)) (337 aa).

A KARI N-terminal Rossmann domain is found at valine 3–threonine 183. NADP(+) is bound by residues tyrosine 26–glutamine 29, lysine 49, serine 52, serine 54, and aspartate 84–glutamine 87. Residue histidine 109 is part of the active site. Glycine 135 serves as a coordination point for NADP(+). Residues threonine 184–valine 329 enclose the KARI C-terminal knotted domain. Mg(2+) is bound by residues aspartate 192, glutamate 196, glutamate 228, and glutamate 232. Serine 253 provides a ligand contact to substrate.

This sequence belongs to the ketol-acid reductoisomerase family. Requires Mg(2+) as cofactor.

It carries out the reaction (2R)-2,3-dihydroxy-3-methylbutanoate + NADP(+) = (2S)-2-acetolactate + NADPH + H(+). The catalysed reaction is (2R,3R)-2,3-dihydroxy-3-methylpentanoate + NADP(+) = (S)-2-ethyl-2-hydroxy-3-oxobutanoate + NADPH + H(+). Its pathway is amino-acid biosynthesis; L-isoleucine biosynthesis; L-isoleucine from 2-oxobutanoate: step 2/4. The protein operates within amino-acid biosynthesis; L-valine biosynthesis; L-valine from pyruvate: step 2/4. Its function is as follows. Involved in the biosynthesis of branched-chain amino acids (BCAA). Catalyzes an alkyl-migration followed by a ketol-acid reduction of (S)-2-acetolactate (S2AL) to yield (R)-2,3-dihydroxy-isovalerate. In the isomerase reaction, S2AL is rearranged via a Mg-dependent methyl migration to produce 3-hydroxy-3-methyl-2-ketobutyrate (HMKB). In the reductase reaction, this 2-ketoacid undergoes a metal-dependent reduction by NADPH to yield (R)-2,3-dihydroxy-isovalerate. This chain is Ketol-acid reductoisomerase (NADP(+)), found in Mycolicibacterium vanbaalenii (strain DSM 7251 / JCM 13017 / BCRC 16820 / KCTC 9966 / NRRL B-24157 / PYR-1) (Mycobacterium vanbaalenii).